The following is an 858-amino-acid chain: Translation initiation factor IF-2 (858 aa).

The disordered stretch occupies residues 49–271; that stretch reads TTTVTHPKSQ…NKPAPVRKDK (223 aa). The span at 80-226 shows a compositional bias: low complexity; sequence NQQQSNSRHQ…RFGGSLNSNN (147 aa). A compositionally biased stretch (basic residues) spans 239-256; that stretch reads NRRRNNRNNKSRNNKNQR. One can recognise a tr-type G domain in the interval 359–528; it reads PRAPVVTVMG…LLQSEVLELT (170 aa). The segment at 368–375 is G1; it reads GHVDHGKT. 368–375 contributes to the GTP binding site; that stretch reads GHVDHGKT. Residues 393–397 are G2; the sequence is GITQA. Positions 414–417 are G3; it reads DTPG. GTP is bound by residues 414–418 and 468–471; these read DTPGH and NKID. The segment at 468 to 471 is G4; that stretch reads NKID. The interval 504 to 506 is G5; that stretch reads SAK.

This sequence belongs to the TRAFAC class translation factor GTPase superfamily. Classic translation factor GTPase family. IF-2 subfamily.

The protein localises to the cytoplasm. One of the essential components for the initiation of protein synthesis. Protects formylmethionyl-tRNA from spontaneous hydrolysis and promotes its binding to the 30S ribosomal subunits. Also involved in the hydrolysis of GTP during the formation of the 70S ribosomal complex. The chain is Translation initiation factor IF-2 from Lactiplantibacillus plantarum (strain ATCC BAA-793 / NCIMB 8826 / WCFS1) (Lactobacillus plantarum).